Reading from the N-terminus, the 343-residue chain is N-acetyl-gamma-glutamyl-phosphate reductase (343 aa).

Residue Cys147 is part of the active site.

The protein belongs to the NAGSA dehydrogenase family. Type 1 subfamily.

The protein resides in the cytoplasm. It catalyses the reaction N-acetyl-L-glutamate 5-semialdehyde + phosphate + NADP(+) = N-acetyl-L-glutamyl 5-phosphate + NADPH + H(+). It participates in amino-acid biosynthesis; L-arginine biosynthesis; N(2)-acetyl-L-ornithine from L-glutamate: step 3/4. Catalyzes the NADPH-dependent reduction of N-acetyl-5-glutamyl phosphate to yield N-acetyl-L-glutamate 5-semialdehyde. The sequence is that of N-acetyl-gamma-glutamyl-phosphate reductase from Staphylococcus saprophyticus subsp. saprophyticus (strain ATCC 15305 / DSM 20229 / NCIMB 8711 / NCTC 7292 / S-41).